The following is a 467-amino-acid chain: Tubulointerstitial nephritis antigen-like (467 aa).

A signal peptide spans 1–21 (MWRCPLGLLLLLPLAGHLALG). The SMB domain maps to 50-98 (EQDLCCRGRADDCALPYLGAICYCDLFCNRTVSDCCPDFWDFCLGVPPP). 5 disulfides stabilise this stretch: C54–C73, C71–C73, C71–C85, C77–C84, and C85–C92. N-linked (GlcNAc...) asparagine glycosylation is present at N78. Residue N161 is glycosylated (N-linked (GlcNAc...) asparagine).

The protein belongs to the peptidase C1 family. In terms of processing, glycosylated. Highly expressed in aorta, heart, placenta, kidney and a colorectal adenocarcinoma cell line. Moderately expressed in skeletal muscle, pancreas, lung, lymph nodes, adrenal gland, bone marrow and thyroid. Weakly expressed in colon, small intestine, ovary, spleen, testis and prostate. Predominantly found in vascular smooth muscle cells, but also in cardiac and skeletal muscle cells as well as kidney.

It is found in the secreted. May be implicated in the adrenocortical zonation and in mechanisms for repressing the CYP11B1 gene expression in adrenocortical cells. This is a non catalytic peptidase C1 family protein. This Homo sapiens (Human) protein is Tubulointerstitial nephritis antigen-like (TINAGL1).